A 295-amino-acid chain; its full sequence is Protoheme IX farnesyltransferase (295 aa).

The next 9 membrane-spanning stretches (helical) occupy residues 8–28, 35–55, 84–104, 107–127, 132–152, 162–182, 208–228, 233–253, and 264–284; these read VTKP…FLLA, YTLF…GCVF, VSLV…WFGA, LACW…SLYM, VYGT…GYCA, LILL…IAIF, ITLY…GGYA, LVVA…GYKV, and FVFS…DFMV.

This sequence belongs to the UbiA prenyltransferase family. Protoheme IX farnesyltransferase subfamily.

The protein resides in the cell inner membrane. It carries out the reaction heme b + (2E,6E)-farnesyl diphosphate + H2O = Fe(II)-heme o + diphosphate. Its pathway is porphyrin-containing compound metabolism; heme O biosynthesis; heme O from protoheme: step 1/1. Converts heme B (protoheme IX) to heme O by substitution of the vinyl group on carbon 2 of heme B porphyrin ring with a hydroxyethyl farnesyl side group. In Enterobacter sp. (strain 638), this protein is Protoheme IX farnesyltransferase.